We begin with the raw amino-acid sequence, 460 residues long: Acetyl-CoA decarbonylase/synthase complex subunit beta (460 aa).

C188, C191, C277, and C279 together coordinate [Ni-Fe-S] cluster. The segment covering 402–416 has biased composition (acidic residues); it reads EETEPEEEEVEEAYP. The segment at 402–422 is disordered; that stretch reads EETEPEEEEVEEAYPEETPIP.

Belongs to the CdhC family. In terms of assembly, monomer. The ACDS complex is made up of alpha, epsilon, beta, gamma and delta chains with a probable stoichiometry of (alpha(2)epsilon(2))(4)-beta(8)-(gamma(1)delta(1))(8). [Ni-Fe-S] cluster serves as cofactor.

The catalysed reaction is Co(I)-[corrinoid Fe-S protein] + acetyl-CoA + H(+) = methyl-Co(III)-[corrinoid Fe-S protein] + CO + CoA. Part of a complex that catalyzes the reversible cleavage of acetyl-CoA, allowing autotrophic growth from CO(2). The alpha-epsilon complex generates CO from CO(2), while the beta subunit (this protein) combines the CO with CoA and a methyl group to form acetyl-CoA. The methyl group, which is incorporated into acetyl-CoA, is transferred to the beta subunit by a corrinoid iron-sulfur protein (the gamma-delta complex). This is Acetyl-CoA decarbonylase/synthase complex subunit beta from Methanothermobacter thermautotrophicus (strain ATCC 29096 / DSM 1053 / JCM 10044 / NBRC 100330 / Delta H) (Methanobacterium thermoautotrophicum).